The following is a 663-amino-acid chain: Meiotically up-regulated gene 60 protein (663 aa).

Residues 578 to 644 enclose the KH domain; the sequence is PAEMHFYVPE…SENLWAVRSL (67 aa).

It localises to the cytoplasm. The protein localises to the nucleus. The protein resides in the cytoskeleton. Its subcellular location is the microtubule organizing center. It is found in the spindle pole body. Functionally, has a role in meiosis. The sequence is that of Meiotically up-regulated gene 60 protein (mug60) from Schizosaccharomyces pombe (strain 972 / ATCC 24843) (Fission yeast).